The chain runs to 309 residues: Oxygen-dependent coproporphyrinogen-III oxidase (309 aa).

Substrate is bound at residue Ser-100. The a divalent metal cation site is built by His-104 and His-114. Catalysis depends on His-114, which acts as the Proton donor. 116-118 (NVR) is a binding site for substrate. A divalent metal cation-binding residues include His-153 and His-183. Positions 248 to 283 (YAEFNLVYDRGTLFGLQSGGRTESILMSLPPIVHWE) are important for dimerization. 266–268 (GGR) is a substrate binding site.

Belongs to the aerobic coproporphyrinogen-III oxidase family. Homodimer. A divalent metal cation is required as a cofactor.

The protein resides in the cytoplasm. The enzyme catalyses coproporphyrinogen III + O2 + 2 H(+) = protoporphyrinogen IX + 2 CO2 + 2 H2O. It functions in the pathway porphyrin-containing compound metabolism; protoporphyrin-IX biosynthesis; protoporphyrinogen-IX from coproporphyrinogen-III (O2 route): step 1/1. In terms of biological role, involved in the heme biosynthesis. Catalyzes the aerobic oxidative decarboxylation of propionate groups of rings A and B of coproporphyrinogen-III to yield the vinyl groups in protoporphyrinogen-IX. This is Oxygen-dependent coproporphyrinogen-III oxidase from Legionella pneumophila (strain Lens).